The primary structure comprises 79 residues: Acyl carrier protein (79 aa).

Positions 2–77 (SSIEDRVKKI…QAVDYIKKHL (76 aa)) constitute a Carrier domain. An O-(pantetheine 4'-phosphoryl)serine modification is found at S37.

Belongs to the acyl carrier protein (ACP) family. Post-translationally, 4'-phosphopantetheine is transferred from CoA to a specific serine of apo-ACP by AcpS. This modification is essential for activity because fatty acids are bound in thioester linkage to the sulfhydryl of the prosthetic group.

The protein resides in the cytoplasm. Its pathway is lipid metabolism; fatty acid biosynthesis. In terms of biological role, carrier of the growing fatty acid chain in fatty acid biosynthesis. This chain is Acyl carrier protein, found in Halorhodospira halophila (strain DSM 244 / SL1) (Ectothiorhodospira halophila (strain DSM 244 / SL1)).